The chain runs to 469 residues: NADH-quinone oxidoreductase subunit 13 (469 aa).

14 helical membrane-spanning segments follow: residues 1 to 21 (MVVLAVLLPVVFGALLLLGLP), 23 to 43 (ALGVLGAGLSFLLNLYLFLTH), 47 to 67 (VAHAFQAPLLPGAGVYWAFGL), 69 to 89 (GLSALFFLTIALTVFLGALVA), 91 to 111 (VEGRFLGLALLMEGLLLGLFA), 115 to 135 (LLVFYVFFEAALIPALLMLYL), 144 to 164 (ALYTFVLFTLVGSLPMLAAVL), 190 to 210 (AFWVFLGFALAFAIKTPLFPL), 258 to 278 (GLLLFLAALSALYGAWVAFAA), 284 to 304 (LLAYAGLSHMGVAALGVFSGT), 308 to 328 (AMGGLYLLAASGVYTGGLFLL), 354 to 374 (LAALALILFLAMVGLPGLSGF), 390 to 410 (WLAALAFLSVIASAAYALTAF), and 430 to 450 (WGFALLSVLALLLMGVFPGYF).

Belongs to the complex I subunit 4 family. NDH-1 is composed of 15 different subunits, Nqo1 to Nqo15. The complex has a L-shaped structure, with the hydrophobic arm (subunits Nqo7, Nqo8 and Nqo10 to Nqo14) embedded in the membrane and the hydrophilic peripheral arm (subunits Nqo1 to Nqo6, Nqo9 and Nqo15) protruding into the bacterial cytoplasm. The hydrophilic domain contains all the redox centers.

The protein localises to the cell inner membrane. It catalyses the reaction a quinone + NADH + 5 H(+)(in) = a quinol + NAD(+) + 4 H(+)(out). In terms of biological role, NDH-1 shuttles electrons from NADH, via FMN and iron-sulfur (Fe-S) centers, to quinones in the respiratory chain. The immediate electron acceptor for the enzyme in this species is menaquinone. Couples the redox reaction to proton translocation (for every two electrons transferred, four hydrogen ions are translocated across the cytoplasmic membrane), and thus conserves the redox energy in a proton gradient required for the synthesis of ATP. The sequence is that of NADH-quinone oxidoreductase subunit 13 (nqo13) from Thermus thermophilus (strain ATCC 27634 / DSM 579 / HB8).